Consider the following 391-residue polypeptide: Phosphoglycerate kinase (391 aa).

Residues 21–23, Arg36, 59–62, Arg113, and Arg146 contribute to the substrate site; these read DLN and HLGR. Residues Lys197, Glu319, and 345–348 each bind ATP; that span reads GGDT.

The protein belongs to the phosphoglycerate kinase family. As to quaternary structure, monomer.

It localises to the cytoplasm. The catalysed reaction is (2R)-3-phosphoglycerate + ATP = (2R)-3-phospho-glyceroyl phosphate + ADP. The protein operates within carbohydrate degradation; glycolysis; pyruvate from D-glyceraldehyde 3-phosphate: step 2/5. The sequence is that of Phosphoglycerate kinase from Shewanella denitrificans (strain OS217 / ATCC BAA-1090 / DSM 15013).